Here is a 66-residue protein sequence, read N- to C-terminus: Heat-stable enterotoxin (66 aa).

The signal sequence occupies residues 1–19 (MKKIVFVLVLMLSSFGTFG). Residues 20 to 50 (QETASRQFGDAFSTPIAAEVNKKACDTELPP) constitute a propeptide that is removed on maturation. 3 disulfides stabilise this stretch: Cys54/Cys59, Cys55/Cys63, and Cys58/Cys66.

Belongs to the heat-stable enterotoxin family.

The protein resides in the secreted. Toxin which activates the particulate form of guanylate cyclase and increases cyclic GMP levels within the host intestinal epithelial cells. This chain is Heat-stable enterotoxin (yst), found in Yersinia kristensenii.